Here is a 310-residue protein sequence, read N- to C-terminus: Pirin-like protein At1g50590 (310 aa).

This sequence belongs to the pirin family.

The protein localises to the nucleus. In Arabidopsis thaliana (Mouse-ear cress), this protein is Pirin-like protein At1g50590.